Consider the following 26-residue polypeptide: uncharacterized protein (26 aa).

Post-translationally, phosphorylated by YfhK.

Its function is as follows. Probable member of a two-component regulatory system YfhA/YfhK. This is an uncharacterized protein from Klebsiella oxytoca.